Here is a 346-residue protein sequence, read N- to C-terminus: Phosphoribosylformylglycinamidine cyclo-ligase (346 aa).

It belongs to the AIR synthase family.

It localises to the cytoplasm. The enzyme catalyses 2-formamido-N(1)-(5-O-phospho-beta-D-ribosyl)acetamidine + ATP = 5-amino-1-(5-phospho-beta-D-ribosyl)imidazole + ADP + phosphate + H(+). It functions in the pathway purine metabolism; IMP biosynthesis via de novo pathway; 5-amino-1-(5-phospho-D-ribosyl)imidazole from N(2)-formyl-N(1)-(5-phospho-D-ribosyl)glycinamide: step 2/2. The polypeptide is Phosphoribosylformylglycinamidine cyclo-ligase (Bacillus cereus (strain ATCC 10987 / NRS 248)).